A 427-amino-acid chain; its full sequence is Enolase (427 aa).

A (2R)-2-phosphoglycerate-binding site is contributed by Q163. E205 acts as the Proton donor in catalysis. Mg(2+) contacts are provided by D242, E285, and D312. Residues K337, R366, S367, and K388 each coordinate (2R)-2-phosphoglycerate. K337 acts as the Proton acceptor in catalysis.

It belongs to the enolase family. Requires Mg(2+) as cofactor.

It localises to the cytoplasm. The protein resides in the secreted. It is found in the cell surface. It carries out the reaction (2R)-2-phosphoglycerate = phosphoenolpyruvate + H2O. The protein operates within carbohydrate degradation; glycolysis; pyruvate from D-glyceraldehyde 3-phosphate: step 4/5. Catalyzes the reversible conversion of 2-phosphoglycerate (2-PG) into phosphoenolpyruvate (PEP). It is essential for the degradation of carbohydrates via glycolysis. This Rhodopseudomonas palustris (strain TIE-1) protein is Enolase.